The sequence spans 141 residues: HTH-type transcriptional repressor NsrR (141 aa).

The region spanning 2-129 (QLTSFTDYGL…DNYTLADLVE (128 aa)) is the HTH rrf2-type domain. Positions 28–51 (ISEVTDVYGVSRNHMVKIINQLSR) form a DNA-binding region, H-T-H motif. Residues Cys91, Cys96, and Cys102 each contribute to the [2Fe-2S] cluster site.

[2Fe-2S] cluster is required as a cofactor.

Nitric oxide-sensitive repressor of genes involved in protecting the cell against nitrosative stress. May require iron for activity. This is HTH-type transcriptional repressor NsrR from Escherichia coli O157:H7 (strain EC4115 / EHEC).